Reading from the N-terminus, the 467-residue chain is Cysteine--tRNA ligase (467 aa).

A Zn(2+)-binding site is contributed by C28. The 'HIGH' region motif lies at 30–40 (ITAYDYSHIGH). Residues C211, H236, and E240 each contribute to the Zn(2+) site. The 'KMSKS' region motif lies at 268–272 (KMSKS). Residue K271 participates in ATP binding.

This sequence belongs to the class-I aminoacyl-tRNA synthetase family. It depends on Zn(2+) as a cofactor.

Its subcellular location is the cytoplasm. It carries out the reaction tRNA(Cys) + L-cysteine + ATP = L-cysteinyl-tRNA(Cys) + AMP + diphosphate. In Archaeoglobus fulgidus (strain ATCC 49558 / DSM 4304 / JCM 9628 / NBRC 100126 / VC-16), this protein is Cysteine--tRNA ligase (cysS).